Consider the following 278-residue polypeptide: UPF0750 membrane protein YxkD (278 aa).

Helical transmembrane passes span 8–28 (VLMLVIGAFFFALAVNLFAIP), 46–66 (LFQWSPGVTNFILNAFLLLIG), 77–97 (YTIIAVAANSLFLHLTHGWSI), 101–121 (ELIINTIFAGVFAGVGIGMII), and 145–165 (ISYALLFFDLIVVFSSYFIIG).

The protein belongs to the UPF0750 family.

Its subcellular location is the cell membrane. In Bacillus subtilis (strain 168), this protein is UPF0750 membrane protein YxkD (yxkD).